Consider the following 260-residue polypeptide: Transmembrane protein 106C (260 aa).

Glycine 2 is lipidated: N-myristoyl glycine. A helical transmembrane segment spans residues 85 to 105 (YVLLSVLLCLLASGLVFFFLF). Asparagine 171 carries an N-linked (GlcNAc...) asparagine glycan. A helical membrane pass occupies residues 196–216 (SYVYFYCTLPAILVHNIVIFM).

Belongs to the TMEM106 family. Interacts with TMEM106B.

The protein localises to the endoplasmic reticulum membrane. Its subcellular location is the membrane. The polypeptide is Transmembrane protein 106C (Tmem106c) (Rattus norvegicus (Rat)).